Reading from the N-terminus, the 229-residue chain is Protein AF_2251 (229 aa).

This sequence belongs to the CinA family.

This is Protein AF_2251 from Archaeoglobus fulgidus (strain ATCC 49558 / DSM 4304 / JCM 9628 / NBRC 100126 / VC-16).